The chain runs to 586 residues: Arginine--tRNA ligase (586 aa).

The short motif at 130 to 140 (ANPTGPMHVGH) is the 'HIGH' region element.

The protein belongs to the class-I aminoacyl-tRNA synthetase family. In terms of assembly, monomer.

It is found in the cytoplasm. The catalysed reaction is tRNA(Arg) + L-arginine + ATP = L-arginyl-tRNA(Arg) + AMP + diphosphate. This Methylobacterium sp. (strain 4-46) protein is Arginine--tRNA ligase.